A 414-amino-acid chain; its full sequence is MPGKSRIIFHIDMNSFYASVEMAYDPALRGKPVAVAGNVKERKGIVVTCSYEARARGVKTTMPVWQAKRHCPELIVLPPNFDRYRNSSRAMFTILREYTDLVEPVSIDEGYMDMTDTPYSSRALETAKEIQSRLQKELLLPSSIGIAPNKFLAKMASDMKKPLGITILRKRQVPDILWPLPVGEMHGVGKKTAEKLKGLGIHTIGELAAADEHSLKRLLGINGPRLKNKANGIHHAPVDPERIYEFKSVGNSSTLSHDSSDEEELLGVFRKLAASVSDRLQRKEVMASKLFIMIRYADWRTITRSTTLRNPIDQKNDILKEAEHLFFKHWNKNPVRLLGITGTDLVEKEQAYKQLDLFSFNEDAKDEPIQQMMEKLNKKYGTKLIRKGATLKKEESKTKGTSFNKDFFQDEKKS.

In terms of domain architecture, UmuC spans 8–189 (IFHIDMNSFY…LPVGEMHGVG (182 aa)). Mg(2+) contacts are provided by Asp-12 and Asp-108. Glu-109 is a catalytic residue. Residues 391-414 (LKKEESKTKGTSFNKDFFQDEKKS) form a disordered region.

This sequence belongs to the DNA polymerase type-Y family. As to quaternary structure, monomer. Mg(2+) is required as a cofactor.

The protein resides in the cytoplasm. The catalysed reaction is DNA(n) + a 2'-deoxyribonucleoside 5'-triphosphate = DNA(n+1) + diphosphate. In terms of biological role, poorly processive, error-prone DNA polymerase involved in untargeted mutagenesis. Copies undamaged DNA at stalled replication forks, which arise in vivo from mismatched or misaligned primer ends. These misaligned primers can be extended by PolIV. Exhibits no 3'-5' exonuclease (proofreading) activity. May be involved in translesion synthesis (TSL), in conjunction with the beta clamp from PolIII. This chain is DNA polymerase IV 1 (dinB1), found in Bacillus subtilis (strain 168).